We begin with the raw amino-acid sequence, 425 residues long: Imidazolonepropionase (425 aa).

Fe(3+) is bound by residues His78 and His80. The Zn(2+) site is built by His78 and His80. Residues Arg87, Tyr150, and His183 each coordinate 4-imidazolone-5-propanoate. Tyr150 is an N-formimidoyl-L-glutamate binding site. His248 serves as a coordination point for Fe(3+). His248 contacts Zn(2+). Gln251 provides a ligand contact to 4-imidazolone-5-propanoate. Asp323 serves as a coordination point for Fe(3+). Residue Asp323 coordinates Zn(2+). The N-formimidoyl-L-glutamate site is built by Asn325 and Gly327. Position 328 (Thr328) interacts with 4-imidazolone-5-propanoate.

This sequence belongs to the metallo-dependent hydrolases superfamily. HutI family. Zn(2+) serves as cofactor. It depends on Fe(3+) as a cofactor.

The protein resides in the cytoplasm. It catalyses the reaction 4-imidazolone-5-propanoate + H2O = N-formimidoyl-L-glutamate. The protein operates within amino-acid degradation; L-histidine degradation into L-glutamate; N-formimidoyl-L-glutamate from L-histidine: step 3/3. Its function is as follows. Catalyzes the hydrolytic cleavage of the carbon-nitrogen bond in imidazolone-5-propanoate to yield N-formimidoyl-L-glutamate. It is the third step in the universal histidine degradation pathway. The chain is Imidazolonepropionase from Polaromonas sp. (strain JS666 / ATCC BAA-500).